Here is a 31-residue protein sequence, read N- to C-terminus: Cytochrome b6-f complex subunit 6 (31 aa).

Residues Ala3–Phe23 traverse the membrane as a helical segment.

The protein belongs to the PetL family. In terms of assembly, the 4 large subunits of the cytochrome b6-f complex are cytochrome b6, subunit IV (17 kDa polypeptide, PetD), cytochrome f and the Rieske protein, while the 4 small subunits are PetG, PetL, PetM and PetN. The complex functions as a dimer.

Its subcellular location is the cellular thylakoid membrane. Its function is as follows. Component of the cytochrome b6-f complex, which mediates electron transfer between photosystem II (PSII) and photosystem I (PSI), cyclic electron flow around PSI, and state transitions. PetL is important for photoautotrophic growth as well as for electron transfer efficiency and stability of the cytochrome b6-f complex. The polypeptide is Cytochrome b6-f complex subunit 6 (Nostoc sp. (strain PCC 7120 / SAG 25.82 / UTEX 2576)).